Reading from the N-terminus, the 738-residue chain is Flowering time control protein FCA (738 aa).

The segment at 1–118 (MHRGGDRSTD…RGDHSDHDNR (118 aa)) is disordered. Composition is skewed to gly residues over residues 52–70 (RGGG…GGGR) and 81–98 (SGGG…GEPG). Residues 109-118 (RGDHSDHDNR) are compositionally biased toward basic and acidic residues. RRM domains follow at residues 122 to 203 (VKLF…YADG) and 213 to 293 (HKLF…FADP). Disordered stretches follow at residues 292–451 (DPKR…PAQQ) and 566–595 (QQSN…IIPS). The segment covering 301 to 311 (SRGGPAFGGPG) has biased composition (gly residues). Over residues 342–358 (HPSSPRSAPHQFNNFGS) the composition is skewed to polar residues. The span at 368 to 377 (TVTSTTDTAT) shows a compositional bias: low complexity. Over residues 383 to 401 (FSGNGSLSSQTAVPSSSHM) the composition is skewed to polar residues. A compositionally biased stretch (low complexity) spans 435-451 (QLQNNQQGQPLQGPAQQ). Residues 575-595 (PTQGQPVQSSNPGAPNAIIPS) show a composition bias toward polar residues. The region spanning 609–642 (VPLTCNWTEHTSPEGFKYYYNSITRESKWDKPEE) is the WW domain. The tract at residues 670–738 (MQQLQSPPQA…QSAQERAWKS (69 aa)) is disordered. The span at 683 to 706 (PAMQPVQQIPQAQQGQQQMQMKQQ) shows a compositional bias: low complexity. Over residues 723 to 732 (RIQQGIQSAQ) the composition is skewed to polar residues.

Interacts with FY. Binds to SF1, FIK, RPRD1B, OsI_31983 and MADS8.

It is found in the nucleus. Its function is as follows. Plays a major role in the promotion of the transition of the vegetative meristem to reproductive development. Required for RNA-mediated chromatin silencing of a range of loci in the genome. Cotranscriptionally recognizes aberrant RNA and marks it for silencing. Controls alternative cleavage and polyadenylation on pre-mRNAs and antisense RNAs. Regulates flowering time, seed size and cell volume, probably via the modulation of cell size. The protein is Flowering time control protein FCA of Oryza sativa subsp. indica (Rice).